A 132-amino-acid chain; its full sequence is Protein MrkF (132 aa).

It is found in the fimbrium. Appears to affect the stability of the intact fimbriae on the cell surface. The protein is Protein MrkF (mrkF) of Klebsiella pneumoniae.